We begin with the raw amino-acid sequence, 78 residues long: Large ribosomal subunit protein bL28 (78 aa).

Residues 1–21 are disordered; it reads MSRVCQLSGKRANNGMAVSHS.

Belongs to the bacterial ribosomal protein bL28 family.

This Synechococcus sp. (strain RCC307) protein is Large ribosomal subunit protein bL28.